We begin with the raw amino-acid sequence, 896 residues long: C-type lectin domain-containing protein 180 (896 aa).

An N-terminal signal peptide occupies residues 1 to 18 (MRHLIFTGFVLTLTALEA). Residues 54–178 (PWGDLYQFRA…CESTSPDHHA (125 aa)) enclose the C-type lectin domain. Asn-133 carries an N-linked (GlcNAc...) asparagine glycan. A disulfide bridge connects residues Cys-154 and Cys-169. Asn-221 and Asn-235 each carry an N-linked (GlcNAc...) asparagine glycan. Disordered stretches follow at residues 243–264 (STVKFSDSEEETSSEEEESVSK), 354–436 (VKQE…LAPE), 492–519 (EKLENSKKSEEEKEELAKKDQMSTEEQK), and 557–809 (KVKA…TTKP). Residues 250 to 260 (SEEETSSEEEE) are compositionally biased toward acidic residues. 2 stretches are compositionally biased toward basic and acidic residues: residues 354–382 (VKQEKTDEKKVEDKKETLANELNDNKISE) and 395–406 (DMPKADIEPPKE). A compositionally biased stretch (acidic residues) spans 407–426 (EDCDEEGSGSGSGEEDEKDE). The segment covering 427-436 (SSEKIELAPE) has biased composition (basic and acidic residues). 3 stretches are compositionally biased toward basic and acidic residues: residues 575-590 (KSAKEGKAEIKEKVGN), 607-663 (QNRE…ETKL), and 683-692 (EEPKSDKDSE). A compositionally biased stretch (low complexity) spans 727 to 739 (STTTESTTVAVKE). Residues 740–768 (VPVDEIEKIAKLEAKQHTEDEKVTVETKQ) show a composition bias toward basic and acidic residues. The segment covering 773 to 809 (TPAPTTSEKTSTTAAPSTKPAEETTTTTEAPSTTTKP) has biased composition (low complexity).

It is found in the secreted. This Caenorhabditis elegans protein is C-type lectin domain-containing protein 180 (clec-180).